The following is a 722-amino-acid chain: Polyribonucleotide nucleotidyltransferase (722 aa).

Residues Asp-495 and Asp-501 each contribute to the Mg(2+) site. A KH domain is found at 562–621; it reads PRLLSFRIDPELIGTVIGPGGRTIKGITERTNTKIDIEDGGIVTIASHDGAAAEEAQRII. In terms of domain architecture, S1 motif spans 631 to 699; it reads GEIFPGSITR…NRGRINLTLR (69 aa). A disordered region spans residues 700–722; the sequence is GVSQNGGMSNYPEPTPTPVAPLT. Residues 712-722 are compositionally biased toward pro residues; that stretch reads EPTPTPVAPLT.

Belongs to the polyribonucleotide nucleotidyltransferase family. Mg(2+) serves as cofactor.

It localises to the cytoplasm. It catalyses the reaction RNA(n+1) + phosphate = RNA(n) + a ribonucleoside 5'-diphosphate. Involved in mRNA degradation. Catalyzes the phosphorolysis of single-stranded polyribonucleotides processively in the 3'- to 5'-direction. This is Polyribonucleotide nucleotidyltransferase from Prochlorococcus marinus (strain NATL2A).